A 93-amino-acid polypeptide reads, in one-letter code: Muconolactone Delta-isomerase (93 aa).

It belongs to the muconolactone Delta-isomerase family. Homodecamer.

It carries out the reaction (S)-muconolactone = (4,5-dihydro-5-oxofuran-2-yl)-acetate. Its pathway is aromatic compound metabolism; beta-ketoadipate pathway; 5-oxo-4,5-dihydro-2-furylacetate from catechol: step 3/3. The sequence is that of Muconolactone Delta-isomerase (catC) from Rhodococcus opacus (Nocardia opaca).